Here is a 395-residue protein sequence, read N- to C-terminus: Glyceraldehyde-3-phosphate dehydrogenase, testis-specific (395 aa).

Positions 1–60 are testis-specific N-terminal extension; the sequence is MSKRDIVLTNVTVVQLLRQPCPEPRVEAEPEPPAQPQPQPEPIKEEVPPPPPPPPAPKKV. The disordered stretch occupies residues 19–59; that stretch reads QPCPEPRVEAEPEPPAQPQPQPEPIKEEVPPPPPPPPAPKK. Composition is skewed to pro residues over residues 31–41 and 48–57; these read EPPAQPQPQPE and PPPPPPPPAP. NAD(+) contacts are provided by residues 72-73, Asp-93, and Lys-138; that span reads RI. Residues 210–212, Thr-241, 270–271, and Arg-293 each bind D-glyceraldehyde 3-phosphate; these read SCT and TG. Cys-211 functions as the Nucleophile in the catalytic mechanism. Asn-375 is an NAD(+) binding site.

This sequence belongs to the glyceraldehyde-3-phosphate dehydrogenase family. As to quaternary structure, homotetramer.

The protein resides in the cytoplasm. The enzyme catalyses D-glyceraldehyde 3-phosphate + phosphate + NAD(+) = (2R)-3-phospho-glyceroyl phosphate + NADH + H(+). Its pathway is carbohydrate degradation; glycolysis; pyruvate from D-glyceraldehyde 3-phosphate: step 1/5. May play an important role in regulating the switch between different pathways for energy production during spermiogenesis and in the spermatozoon. Required for sperm motility and male fertility. In Bos taurus (Bovine), this protein is Glyceraldehyde-3-phosphate dehydrogenase, testis-specific (GAPDHS).